The primary structure comprises 84 residues: RNA-binding protein Hfq (84 aa).

In terms of domain architecture, Sm spans 11-71; the sequence is DTFLNHVRKN…ISTIMPGHPV (61 aa).

This sequence belongs to the Hfq family. Homohexamer.

In terms of biological role, RNA chaperone that binds small regulatory RNA (sRNAs) and mRNAs to facilitate mRNA translational regulation in response to envelope stress, environmental stress and changes in metabolite concentrations. Also binds with high specificity to tRNAs. The protein is RNA-binding protein Hfq of Methylobacterium nodulans (strain LMG 21967 / CNCM I-2342 / ORS 2060).